The primary structure comprises 268 residues: Small ribosomal subunit protein eS1 (268 aa).

Residues 1-21 are disordered; sequence MAVGKNKGLSKGGKKGGKKKV.

Belongs to the eukaryotic ribosomal protein eS1 family. Component of the small ribosomal subunit. Mature ribosomes consist of a small (40S) and a large (60S) subunit. The 40S subunit contains about 33 different proteins and 1 molecule of RNA (18S). The 60S subunit contains about 49 different proteins and 3 molecules of RNA (28S, 5.8S and 5S).

The protein localises to the cytoplasm. In terms of biological role, essential for oogenesis; required for late follicle cell development. The chain is Small ribosomal subunit protein eS1 from Drosophila willistoni (Fruit fly).